Consider the following 295-residue polypeptide: Ubiquitin-conjugating enzyme E2-34 kDa (295 aa).

The UBC core domain maps to 7 to 169 (TASSLLLRQY…VKMEVERSKQ (163 aa)). Cysteine 95 (glycyl thioester intermediate) is an active-site residue. The segment at 185-295 (ISQSKLDEPE…EDVERVSKKI (111 aa)) is disordered. Serine 186 carries the phosphoserine modification. Positions 189–200 (KLDEPESNKDMA) are enriched in basic and acidic residues. Acidic residues-rich tracts occupy residues 207–226 (SDLDDDENGSVILQDDDYDD) and 234–265 (EDDDVYNYNDNDDDDERIEFEDDDDDDDDSID). Basic and acidic residues predominate over residues 269 to 279 (VMDRKQPHKAE). Phosphoserine occurs at positions 282 and 292.

The protein belongs to the ubiquitin-conjugating enzyme family. As to quaternary structure, interacts with CDC53. Component of the E3 ubiquitin ligase complexes SCF with CDC53, SKP1/CBF3D, HRT1 and some F-box proteins like MET30 and CDC4.

It is found in the cytoplasm. Its subcellular location is the nucleus. The enzyme catalyses S-ubiquitinyl-[E1 ubiquitin-activating enzyme]-L-cysteine + [E2 ubiquitin-conjugating enzyme]-L-cysteine = [E1 ubiquitin-activating enzyme]-L-cysteine + S-ubiquitinyl-[E2 ubiquitin-conjugating enzyme]-L-cysteine.. It functions in the pathway protein modification; protein ubiquitination. Its function is as follows. Catalyzes the covalent attachment of ubiquitin to other proteins. Capable, in vitro, to ubiquitinate histone H2A. Functionally, mediates the initiation of DNA replication (transition of G1 to S phase in cell cycle). Essential component of the E3 ubiquitin ligase complex SCF (SKP1-CUL1-F-box protein), which mediates the ubiquitination and subsequent proteasomal degradation of target proteins. Involved in the regulation of methionine biosynthesis genes and in the degradation of CDC6 together with CDC4 and CDC53. This Saccharomyces cerevisiae (strain ATCC 204508 / S288c) (Baker's yeast) protein is Ubiquitin-conjugating enzyme E2-34 kDa (CDC34).